We begin with the raw amino-acid sequence, 499 residues long: NAD(P)H-quinone oxidoreductase chain 4, chloroplastic (499 aa).

Helical transmembrane passes span 4-24 (FPWL…IPFL), 31-51 (IIRW…TYIF), 87-107 (IGLI…AWPV), 113-133 (LFYF…ASQD), 134-154 (ILLF…LLAM), 167-187 (FILY…IMAF), 211-231 (IIIY…IPFH), 242-262 (HYST…YGLI), 274-294 (SFFA…AALT), 310-330 (VSHM…GLNG), 331-351 (AILQ…LAGI), 385-405 (SLAL…LGVI), 416-436 (IIII…LLSM), and 462-482 (IFIL…PNFV).

This sequence belongs to the complex I subunit 4 family.

The protein resides in the plastid. The protein localises to the chloroplast thylakoid membrane. The enzyme catalyses a plastoquinone + NADH + (n+1) H(+)(in) = a plastoquinol + NAD(+) + n H(+)(out). It catalyses the reaction a plastoquinone + NADPH + (n+1) H(+)(in) = a plastoquinol + NADP(+) + n H(+)(out). This chain is NAD(P)H-quinone oxidoreductase chain 4, chloroplastic (ndhD), found in Marchantia polymorpha (Common liverwort).